Reading from the N-terminus, the 691-residue chain is Elongation factor G (691 aa).

In terms of domain architecture, tr-type G spans 8 to 283 (EDYRNFGIMA…AVVDFLPNPT (276 aa)). Residues 17 to 24 (AHIDAGKT), 81 to 85 (DTPGH), and 135 to 138 (NKMD) each bind GTP.

This sequence belongs to the TRAFAC class translation factor GTPase superfamily. Classic translation factor GTPase family. EF-G/EF-2 subfamily.

It is found in the cytoplasm. Catalyzes the GTP-dependent ribosomal translocation step during translation elongation. During this step, the ribosome changes from the pre-translocational (PRE) to the post-translocational (POST) state as the newly formed A-site-bound peptidyl-tRNA and P-site-bound deacylated tRNA move to the P and E sites, respectively. Catalyzes the coordinated movement of the two tRNA molecules, the mRNA and conformational changes in the ribosome. The protein is Elongation factor G of Maricaulis maris (strain MCS10) (Caulobacter maris).